We begin with the raw amino-acid sequence, 104 residues long: Large ribosomal subunit protein bL21 (104 aa).

The protein belongs to the bacterial ribosomal protein bL21 family. In terms of assembly, part of the 50S ribosomal subunit. Contacts protein L20.

This protein binds to 23S rRNA in the presence of protein L20. This is Large ribosomal subunit protein bL21 from Thermotoga sp. (strain RQ2).